The chain runs to 311 residues: Energy-coupling factor transporter ATP-binding protein EcfA2 (311 aa).

Positions 3–265 (IKLKDVKFTF…IAFLEENNLQ (263 aa)) constitute an ABC transporter domain. 40 to 47 (GQTGSGKT) lines the ATP pocket.

It belongs to the ABC transporter superfamily. Energy-coupling factor EcfA family. Forms a stable energy-coupling factor (ECF) transporter complex composed of 2 membrane-embedded substrate-binding proteins (S component), 2 ATP-binding proteins (A component) and 2 transmembrane proteins (T component).

It localises to the cell membrane. Its function is as follows. ATP-binding (A) component of a common energy-coupling factor (ECF) ABC-transporter complex. Unlike classic ABC transporters this ECF transporter provides the energy necessary to transport a number of different substrates. The polypeptide is Energy-coupling factor transporter ATP-binding protein EcfA2 (Mycoplasmopsis synoviae (strain 53) (Mycoplasma synoviae)).